The following is a 65-amino-acid chain: Large ribosomal subunit protein bL32 (65 aa).

Residues 1–19 (MAVQKSRKTPSKRGMRRSH) are compositionally biased toward basic residues. The segment at 1–32 (MAVQKSRKTPSKRGMRRSHNALTNPTLSEDQE) is disordered.

The protein belongs to the bacterial ribosomal protein bL32 family.

This Ruthia magnifica subsp. Calyptogena magnifica protein is Large ribosomal subunit protein bL32.